The chain runs to 198 residues: Superoxide dismutase [Fe] (198 aa).

4 residues coordinate Fe(3+): histidine 27, histidine 74, aspartate 157, and histidine 161.

This sequence belongs to the iron/manganese superoxide dismutase family. Homodimer. The cofactor is Fe(3+).

It catalyses the reaction 2 superoxide + 2 H(+) = H2O2 + O2. In terms of biological role, destroys superoxide anion radicals which are normally produced within the cells and which are toxic to biological systems. In Pseudomonas putida (Arthrobacter siderocapsulatus), this protein is Superoxide dismutase [Fe] (sodB).